Reading from the N-terminus, the 935-residue chain is DNA repair protein rev1 (935 aa).

Residues 59–147 (SKSDLFHGLA…KILPWINYRT (89 aa)) form the BRCT domain. Residues 162–178 (SKPSQPEGNLEDIQTSS) show a composition bias toward polar residues. The segment at 162 to 193 (SKPSQPEGNLEDIQTSSQEEEHDNEKDKTKES) is disordered. Basic and acidic residues predominate over residues 184-193 (DNEKDKTKES). The segment at 235–245 (FFSSSRLHHLS) is interaction with target DNA. DCTP is bound by residues arginine 240 and 283–287 (DFDCF). A UmuC domain is found at 279 to 460 (LLHVDFDCFF…LSVQDLPGVG (182 aa)). Positions 283 and 284 each coordinate Mg(2+). The tract at residues 310-312 (IKN) is interaction with target DNA. DCTP is bound by residues 317-323 (SCNYEAR), asparagine 329, and aspartate 378. The Mg(2+) site is built by aspartate 378 and glutamate 379. Interaction with target DNA regions lie at residues 460-463 (GSSQ) and 517-525 (RRSISVDVN).

It belongs to the DNA polymerase type-Y family. Mg(2+) is required as a cofactor.

The protein resides in the nucleus. Its subcellular location is the nucleolus. It localises to the mitochondrion. The protein localises to the cytoplasm. It is found in the cytoskeleton. The protein resides in the spindle. Functionally, deoxycytidyl transferase involved in DNA repair. Transfers a dCMP residue from dCTP to the 3'-end of a DNA primer in a template-dependent reaction. May assist in the first step in the bypass of abasic lesions by the insertion of a nucleotide opposite the lesion. Required for normal induction of mutations by physical and chemical agents. Involved in mitochondrial DNA mutagenesis. The protein is DNA repair protein rev1 of Schizosaccharomyces pombe (strain 972 / ATCC 24843) (Fission yeast).